Here is a 326-residue protein sequence, read N- to C-terminus: Undecaprenyl-phosphate 4-deoxy-4-formamido-L-arabinose transferase (326 aa).

Helical transmembrane passes span 235-255 (LLSVVGSVVALSGFLLAVLLI) and 270-290 (VFTLFAVLFTFIGAQFVGMGL).

The protein belongs to the glycosyltransferase 2 family.

The protein localises to the cell inner membrane. The catalysed reaction is UDP-4-deoxy-4-formamido-beta-L-arabinose + di-trans,octa-cis-undecaprenyl phosphate = 4-deoxy-4-formamido-alpha-L-arabinopyranosyl di-trans,octa-cis-undecaprenyl phosphate + UDP. Its pathway is glycolipid biosynthesis; 4-amino-4-deoxy-alpha-L-arabinose undecaprenyl phosphate biosynthesis; 4-amino-4-deoxy-alpha-L-arabinose undecaprenyl phosphate from UDP-4-deoxy-4-formamido-beta-L-arabinose and undecaprenyl phosphate: step 1/2. It participates in bacterial outer membrane biogenesis; lipopolysaccharide biosynthesis. Its function is as follows. Catalyzes the transfer of 4-deoxy-4-formamido-L-arabinose from UDP to undecaprenyl phosphate. The modified arabinose is attached to lipid A and is required for resistance to polymyxin and cationic antimicrobial peptides. This is Undecaprenyl-phosphate 4-deoxy-4-formamido-L-arabinose transferase from Serratia proteamaculans (strain 568).